Here is a 93-residue protein sequence, read N- to C-terminus: Small ribosomal subunit protein uS19 (93 aa).

The protein belongs to the universal ribosomal protein uS19 family.

Its function is as follows. Protein S19 forms a complex with S13 that binds strongly to the 16S ribosomal RNA. This is Small ribosomal subunit protein uS19 from Leptospira borgpetersenii serovar Hardjo-bovis (strain JB197).